A 515-amino-acid chain; its full sequence is Thioredoxin domain-containing protein 2 (515 aa).

Positions 1-23 (MTLNNGGKANERGSNENPLQALS) are disordered. Phosphoserine is present on residues Ser14 and Ser39. A disordered region spans residues 51 to 390 (TLHMSTEESE…NTIKSSEEDV (340 aa)). Composition is skewed to polar residues over residues 61 to 75 (FPQQ…SENT) and 85 to 136 (KPSS…TNST). Tandem repeats lie at residues 92–106 (QLKQ…GYSK), 107–121 (QTNY…AKTT), 122–136 (HPKQ…TNST), 137–151 (HYRE…EDII), 152–166 (QPKK…EDII), 167–181 (QSKK…EDII), 182–196 (QSKK…EDII), 197–211 (QSKK…EDII), 212–226 (QSKK…EDII), 227–241 (QPKK…EDSV), 242–256 (PSKK…EDSV), 257–271 (QPKK…EDSV), 272–286 (QSKE…KDSI), 287–301 (QSKE…QDSI), 302–316 (QSKE…KDSV), 317–331 (QSKE…HESI), 332–346 (QSKE…KDSI), 347–362 (PSKE…DTIQ), 363–375 (SQEE…EDTI), 376–390 (QSQE…EEDV), and 391–405 (QLSE…AEIE). The 21 X 15 AA approximate tandem repeat of Q-P-K-X-G-D-I-P-K-S-[PS]-E-[KE]-X-I stretch occupies residues 92–405 (QLKQENISKS…KLLGLGAEIE (314 aa)). Composition is skewed to basic and acidic residues over residues 137–293 (HYRE…ETKV) and 302–358 (QSKE…KSPE). The residue at position 146 (Ser146) is a Phosphoserine. A compositionally biased stretch (polar residues) spans 375–384 (IQSQEGNTIK). Residues 398–515 (LGLGAEIETL…KLERSISELK (118 aa)) form the Thioredoxin domain. Cys442 and Cys445 are disulfide-bonded.

Testis-specific. Strongly expressed in the testicular seminiferous tubules, mostly in the round spermatids.

The protein localises to the cytoplasm. Probably plays a regulatory role in sperm development. May participate in regulation of fibrous sheath (FS) assembly by supporting the formation of disulfide bonds during sperm tail morphogenesis. May also be required to rectify incorrect disulfide pairing and generate suitable pairs between the FS constituents. Can reduce disulfide bonds in vitro in the presence of NADP and thioredoxin reductase. This is Thioredoxin domain-containing protein 2 (Txndc2) from Mus musculus (Mouse).